A 708-amino-acid chain; its full sequence is Exocyst complex component 5 (708 aa).

Position 2 is an N-acetylalanine (alanine 2). The stretch at 40–101 (KRLLEEFVNH…AFQHFQELDE (62 aa)) forms a coiled coil. A phosphothreonine mark is found at threonine 122, threonine 395, and threonine 405. Serine 412 carries the post-translational modification Phosphoserine.

Belongs to the SEC10 family. As to quaternary structure, the exocyst complex is composed of EXOC1, EXOC2, EXOC3, EXOC4, EXOC5, EXOC6, EXOC7 and EXOC8. Interacts with EXOC3L1. In terms of tissue distribution, ubiquitous.

The protein localises to the cytoplasm. It localises to the midbody. Functionally, component of the exocyst complex involved in the docking of exocytic vesicles with fusion sites on the plasma membrane. The chain is Exocyst complex component 5 (EXOC5) from Homo sapiens (Human).